We begin with the raw amino-acid sequence, 215 residues long: Pyridoxine/pyridoxamine 5'-phosphate oxidase (215 aa).

Substrate contacts are provided by residues R9–Y12 and K69. FMN contacts are provided by residues R64–K69, F79–T80, K86, and Q108. Substrate-binding residues include Y126, R130, and S134. FMN is bound by residues Q143–S144 and W188. R194–H196 lines the substrate pocket. R198 serves as a coordination point for FMN.

It belongs to the pyridoxamine 5'-phosphate oxidase family. Homodimer. It depends on FMN as a cofactor.

It carries out the reaction pyridoxamine 5'-phosphate + O2 + H2O = pyridoxal 5'-phosphate + H2O2 + NH4(+). It catalyses the reaction pyridoxine 5'-phosphate + O2 = pyridoxal 5'-phosphate + H2O2. It participates in cofactor metabolism; pyridoxal 5'-phosphate salvage; pyridoxal 5'-phosphate from pyridoxamine 5'-phosphate: step 1/1. The protein operates within cofactor metabolism; pyridoxal 5'-phosphate salvage; pyridoxal 5'-phosphate from pyridoxine 5'-phosphate: step 1/1. Its function is as follows. Catalyzes the oxidation of either pyridoxine 5'-phosphate (PNP) or pyridoxamine 5'-phosphate (PMP) into pyridoxal 5'-phosphate (PLP). The protein is Pyridoxine/pyridoxamine 5'-phosphate oxidase of Pseudomonas putida (strain W619).